The sequence spans 418 residues: Acyl-[acyl-carrier-protein] desaturase 4, chloroplastic (418 aa).

The transit peptide at 1–70 (MASSGLAVAA…ATAAAPADTA (70 aa)) directs the protein to the chloroplast. 6 residues coordinate Fe cation: glutamate 152, glutamate 190, histidine 193, glutamate 243, glutamate 276, and histidine 279.

The protein belongs to the fatty acid desaturase type 2 family. In terms of assembly, homodimer. Fe(2+) is required as a cofactor.

It is found in the plastid. The protein resides in the chloroplast. It functions in the pathway lipid metabolism; fatty acid metabolism. Functionally, introduces a cis double bond in the acyl chain of an acyl-[acyl-carrier protein]. The polypeptide is Acyl-[acyl-carrier-protein] desaturase 4, chloroplastic (Oryza sativa subsp. japonica (Rice)).